The primary structure comprises 240 residues: uncharacterized protein (240 aa).

The C2H2-type zinc finger occupies 3 to 27 (LKCLECDKLLSSIEMAEFHSTKTSH). 2 disordered regions span residues 21-43 (HSTKTSHDQFEETEEEIKKRSPE) and 120-171 (AEIE…RFSI). The segment covering 120-136 (AEIERDKKRRAAERENK) has biased composition (basic and acidic residues). The segment covering 155-166 (SSSTCTRTPPTS) has biased composition (low complexity).

This is an uncharacterized protein from Schizosaccharomyces pombe (strain 972 / ATCC 24843) (Fission yeast).